The chain runs to 425 residues: Pre-mRNA-splicing factor PRP46 (425 aa).

7 WD repeats span residues Gly111–Thr151, Gly154–Asp193, Gly196–Thr235, Gly238–Thr279, His281–Asn320, Glu322–Lys360, and Glu371–Ser410.

This sequence belongs to the WD repeat PRL1/PRL2 family. In terms of assembly, associated with the spliceosome.

The protein localises to the cytoplasm. It localises to the nucleus. Functionally, involved in pre-mRNA splicing and required for cell cycle progression at G2/M. The polypeptide is Pre-mRNA-splicing factor PRP46 (PRP46) (Eremothecium gossypii (strain ATCC 10895 / CBS 109.51 / FGSC 9923 / NRRL Y-1056) (Yeast)).